The chain runs to 1405 residues: DNA-directed RNA polymerase subunit beta' (1405 aa).

Zn(2+)-binding residues include cysteine 70, cysteine 72, cysteine 85, and cysteine 88. Mg(2+) contacts are provided by aspartate 460, aspartate 462, and aspartate 464. Residues cysteine 815, cysteine 890, cysteine 897, and cysteine 900 each coordinate Zn(2+).

It belongs to the RNA polymerase beta' chain family. As to quaternary structure, the RNAP catalytic core consists of 2 alpha, 1 beta, 1 beta' and 1 omega subunit. When a sigma factor is associated with the core the holoenzyme is formed, which can initiate transcription. Requires Mg(2+) as cofactor. It depends on Zn(2+) as a cofactor.

The catalysed reaction is RNA(n) + a ribonucleoside 5'-triphosphate = RNA(n+1) + diphosphate. In terms of biological role, DNA-dependent RNA polymerase catalyzes the transcription of DNA into RNA using the four ribonucleoside triphosphates as substrates. This chain is DNA-directed RNA polymerase subunit beta', found in Xanthomonas campestris pv. campestris (strain 8004).